The primary structure comprises 185 residues: Large ribosomal subunit protein bL25 (185 aa).

The protein belongs to the bacterial ribosomal protein bL25 family. CTC subfamily. As to quaternary structure, part of the 50S ribosomal subunit; part of the 5S rRNA/L5/L18/L25 subcomplex. Contacts the 5S rRNA. Binds to the 5S rRNA independently of L5 and L18.

In terms of biological role, this is one of the proteins that binds to the 5S RNA in the ribosome where it forms part of the central protuberance. The protein is Large ribosomal subunit protein bL25 of Chlamydia pneumoniae (Chlamydophila pneumoniae).